A 659-amino-acid chain; its full sequence is MSLPPEKASELKQLIHQQLSKMDVHGRIREILAETIREELAPDQQHLSTEDLIKALRRRGIIDDVMKELNFVTDSVDQELPSSPKQTVGFDKQSTLKKTNVDPTRRYLYLQVLGGKAFLEHLQEPEPLPGQICSTFTLCLHYRNQRFRSKPVPCACEPDFHDGFLLEVHRESLGDGTRMADSTTMLSISDPIHMVLIKTDIFGETTLVASYFLEWRSVLGSENGVTNLTVELMGVGTESKVSVGILNIKLEMYPPLSQTLSQEVVNTQLALERQKTAEKERLFLVYAKQWWREYLQIRPSHNSRLVKIFAQDENGINRPVCSYVKPLRAGRLLDTPRQAARFVNVLGYERAPVIGGGGKQEQWCTLLAFLCRNKGDCEDHANLLCSLLLGYGLEAFVCVGTKAKGAPHAWVMTCGTDGTIMFWESLTGHRYIHKPTNPDGPPLAEQPKPLYPYRTIGCVFNHQMFLGNCQPSDAVETCIFDLNDESKWKPMSEEAIKSVCAPGATTSLPPFPPLCASTIDASVTSNEIEMQLRLLVSEHRKDLGLTTVWEDQLSYLLSPALASYEFERTTSISAGNEEFQDAIRRAVPDGHTFKGFPIHFVYRNARRAFATCLRSPFCEEIICCRGDQVRLAVRVRVFTYPESACAVWIMFACKYRSVL.

Phosphoserine is present on residues Ser-75 and Ser-83.

This sequence belongs to the CEP76 family. In terms of assembly, interacts with CCP110 and CEP97.

It is found in the cytoplasm. The protein localises to the cytoskeleton. Its subcellular location is the microtubule organizing center. The protein resides in the centrosome. It localises to the centriole. Functionally, centrosomal protein involved in regulation of centriole duplication. Required to limit centriole duplication to once per cell cycle by preventing centriole reduplication. This chain is Centrosomal protein of 76 kDa (Cep76), found in Mus musculus (Mouse).